A 160-amino-acid polypeptide reads, in one-letter code: Xanthine-guanine phosphoribosyltransferase (160 aa).

5-phospho-alpha-D-ribose 1-diphosphate-binding positions include 41-42 (RG) and 93-101 (DDLVDTGRT). Position 94 (Asp94) interacts with Mg(2+). Guanine contacts are provided by Asp97 and Ile140. Residues Asp97 and Ile140 each coordinate xanthine. Residues 97–101 (DTGRT) and 139–140 (WI) each bind GMP.

This sequence belongs to the purine/pyrimidine phosphoribosyltransferase family. XGPT subfamily. In terms of assembly, homotetramer. Mg(2+) serves as cofactor.

It localises to the cell inner membrane. It catalyses the reaction GMP + diphosphate = guanine + 5-phospho-alpha-D-ribose 1-diphosphate. The catalysed reaction is XMP + diphosphate = xanthine + 5-phospho-alpha-D-ribose 1-diphosphate. The enzyme catalyses IMP + diphosphate = hypoxanthine + 5-phospho-alpha-D-ribose 1-diphosphate. It functions in the pathway purine metabolism; GMP biosynthesis via salvage pathway; GMP from guanine: step 1/1. Its pathway is purine metabolism; XMP biosynthesis via salvage pathway; XMP from xanthine: step 1/1. Purine salvage pathway enzyme that catalyzes the transfer of the ribosyl-5-phosphate group from 5-phospho-alpha-D-ribose 1-diphosphate (PRPP) to the N9 position of the 6-oxopurines guanine and xanthine to form the corresponding ribonucleotides GMP (guanosine 5'-monophosphate) and XMP (xanthosine 5'-monophosphate), with the release of PPi. To a lesser extent, also acts on hypoxanthine. The polypeptide is Xanthine-guanine phosphoribosyltransferase (Desulfotalea psychrophila (strain LSv54 / DSM 12343)).